The following is a 356-amino-acid chain: Ferrochelatase (356 aa).

His-214 and Glu-295 together coordinate Fe cation.

Belongs to the ferrochelatase family.

The protein resides in the cytoplasm. It carries out the reaction heme b + 2 H(+) = protoporphyrin IX + Fe(2+). The protein operates within porphyrin-containing compound metabolism; protoheme biosynthesis; protoheme from protoporphyrin-IX: step 1/1. Functionally, catalyzes the ferrous insertion into protoporphyrin IX. In Paraburkholderia phytofirmans (strain DSM 17436 / LMG 22146 / PsJN) (Burkholderia phytofirmans), this protein is Ferrochelatase.